We begin with the raw amino-acid sequence, 94 residues long: Acylphosphatase (94 aa).

Positions 7 to 94 (RLTARITGVV…GEFDDFRIID (88 aa)) constitute an Acylphosphatase-like domain. Catalysis depends on residues arginine 22 and asparagine 40.

Belongs to the acylphosphatase family.

The enzyme catalyses an acyl phosphate + H2O = a carboxylate + phosphate + H(+). This is Acylphosphatase (acyP) from Paenarthrobacter aurescens (strain TC1).